Reading from the N-terminus, the 396-residue chain is Elongation factor Tu (396 aa).

The 195-residue stretch at 11-205 (KPHVNIGTIG…VVDEYIPTPK (195 aa)) folds into the tr-type G domain. Residues 20-27 (GHVDHGKT) are G1. A GTP-binding site is contributed by 20 to 27 (GHVDHGKT). Thr-27 serves as a coordination point for Mg(2+). The tract at residues 61–65 (GITIN) is G2. Residues 82-85 (DAPG) form a G3 region. Residues 82–86 (DAPGH) and 137–140 (NKTD) contribute to the GTP site. The G4 stretch occupies residues 137–140 (NKTD). Residues 175 to 177 (SAL) form a G5 region.

The protein belongs to the TRAFAC class translation factor GTPase superfamily. Classic translation factor GTPase family. EF-Tu/EF-1A subfamily. As to quaternary structure, monomer.

The protein resides in the cytoplasm. It catalyses the reaction GTP + H2O = GDP + phosphate + H(+). In terms of biological role, GTP hydrolase that promotes the GTP-dependent binding of aminoacyl-tRNA to the A-site of ribosomes during protein biosynthesis. The protein is Elongation factor Tu of Limosilactobacillus fermentum (strain NBRC 3956 / LMG 18251) (Lactobacillus fermentum).